We begin with the raw amino-acid sequence, 454 residues long: tRNA modification GTPase MnmE (454 aa).

(6S)-5-formyl-5,6,7,8-tetrahydrofolate contacts are provided by R23, E80, and K120. Residues 216–377 form the TrmE-type G domain; sequence GMRVVIAGRP…VREHLKACIG (162 aa). Position 226 (N226) interacts with K(+). GTP is bound by residues 226–231, 245–251, 270–273, and 335–338; these read NAGKSS, TEIAGTT, DTAG, and NKAD. Residue S230 participates in Mg(2+) binding. T245, I247, and T250 together coordinate K(+). T251 provides a ligand contact to Mg(2+). K454 contacts (6S)-5-formyl-5,6,7,8-tetrahydrofolate.

This sequence belongs to the TRAFAC class TrmE-Era-EngA-EngB-Septin-like GTPase superfamily. TrmE GTPase family. Homodimer. Heterotetramer of two MnmE and two MnmG subunits. K(+) serves as cofactor.

The protein localises to the cytoplasm. In terms of biological role, exhibits a very high intrinsic GTPase hydrolysis rate. Involved in the addition of a carboxymethylaminomethyl (cmnm) group at the wobble position (U34) of certain tRNAs, forming tRNA-cmnm(5)s(2)U34. This chain is tRNA modification GTPase MnmE, found in Pseudoalteromonas translucida (strain TAC 125).